Reading from the N-terminus, the 217-residue chain is PRELI domain-containing protein 1, mitochondrial (217 aa).

The 139-residue stretch at Thr-36 to Pro-174 folds into the PRELI/MSF1 domain.

Forms a complex with TRIAP1 in the mitochondrion intermembrane space. Interacts with OPA1 and AIFM1. In terms of tissue distribution, abundantly expressed in all tissues tested except testis with highest levels in thymus.

The protein localises to the mitochondrion. It is found in the mitochondrion intermembrane space. The catalysed reaction is a 1,2-diacyl-sn-glycero-3-phosphate(in) = a 1,2-diacyl-sn-glycero-3-phosphate(out). Involved in the modulation of the mitochondrial apoptotic pathway by ensuring the accumulation of cardiolipin (CL) in mitochondrial membranes. In vitro, the TRIAP1:PRELID1 complex mediates the transfer of phosphatidic acid (PA) between liposomes and probably functions as a PA transporter across the mitochondrion intermembrane space to provide PA for CL synthesis in the inner membrane. Regulates the mitochondrial apoptotic pathway in primary Th cells. Regulates Th cell differentiation by down-regulating STAT6 thereby reducing IL-4-induced Th2 cell number. May be important for the development of vital and immunocompetent organs. In Mus musculus (Mouse), this protein is PRELI domain-containing protein 1, mitochondrial (Prelid1).